A 156-amino-acid chain; its full sequence is Small ribosomal subunit protein uS7 (156 aa).

The protein belongs to the universal ribosomal protein uS7 family. As to quaternary structure, part of the 30S ribosomal subunit. Contacts proteins S9 and S11.

In terms of biological role, one of the primary rRNA binding proteins, it binds directly to 16S rRNA where it nucleates assembly of the head domain of the 30S subunit. Is located at the subunit interface close to the decoding center, probably blocks exit of the E-site tRNA. This Geobacillus stearothermophilus (Bacillus stearothermophilus) protein is Small ribosomal subunit protein uS7 (rpsG).